Here is a 514-residue protein sequence, read N- to C-terminus: Cytidine and dCMP deaminase domain-containing protein 1 (514 aa).

Polar residues-rich tracts occupy residues 1-11 (MKEAGQMQNLE) and 18-27 (SVSTQTGSMT). 2 disordered regions span residues 1–27 (MKEA…GSMT) and 55–83 (RQKS…TDKR). Basic and acidic residues predominate over residues 59-83 (QKNEEGKHGPLGDNEERTRVSTDKR). The CMP/dCMP-type deaminase 1 domain occupies 70–168 (GDNEERTRVS…SLLTEASSSE (99 aa)). Zn(2+)-binding residues include His109, Cys134, and Cys137. Residues 271 to 283 (NLRQNMKDLILLL) carry the Nuclear export signal motif. The region spanning 317–482 (EIARHCMVQA…LNPSGAYGLE (166 aa)) is the CMP/dCMP-type deaminase 2 domain. Residue His398 participates in Zn(2+) binding. Residue Glu400 is the Proton donor of the active site. The Zn(2+) site is built by Cys426 and Cys429. The disordered stretch occupies residues 480–514 (GLEQNEPERRENGVLRPVPQKEEQHQDKKLRLGIH). A compositionally biased stretch (basic and acidic residues) spans 485-514 (EPERRENGVLRPVPQKEEQHQDKKLRLGIH). The Bipartite nuclear localization signal signature appears at 488-510 (RRENGVLRPVPQKEEQHQDKKLR).

Belongs to the cytidine and deoxycytidylate deaminase family. It depends on Zn(2+) as a cofactor. Widely expressed. Expressed at high levels in the testis.

It localises to the cytoplasm. The protein resides in the nucleus. The enzyme catalyses 2'-deoxycytidine + H2O + H(+) = 2'-deoxyuridine + NH4(+). It carries out the reaction cytidine + H2O + H(+) = uridine + NH4(+). In terms of biological role, catalyzes the deamination of cytidine and deoxycytidine into uridine and deoxyuridine, respectively. May play an important role in testicular development and spermatogenesis. This Homo sapiens (Human) protein is Cytidine and dCMP deaminase domain-containing protein 1 (CDADC1).